The primary structure comprises 283 residues: Ribosomal RNA small subunit methyltransferase H (283 aa).

S-adenosyl-L-methionine-binding positions include 31–33 (GGH), aspartate 50, phenylalanine 77, aspartate 93, and glutamine 100.

The protein belongs to the methyltransferase superfamily. RsmH family.

The protein localises to the cytoplasm. It carries out the reaction cytidine(1402) in 16S rRNA + S-adenosyl-L-methionine = N(4)-methylcytidine(1402) in 16S rRNA + S-adenosyl-L-homocysteine + H(+). Specifically methylates the N4 position of cytidine in position 1402 (C1402) of 16S rRNA. The protein is Ribosomal RNA small subunit methyltransferase H of Trichodesmium erythraeum (strain IMS101).